The following is a 361-amino-acid chain: MTVSTAQMRFWSPEVRELEPYVPGEQPKIQNLLKLNTNENPYPPSPKVVEAVQAVLHEQADVLRLYPDPDATALKQAIAKQQNIDVSQVFVGNGSDEVLAHIFKAFFLQDEPILYPDITYSFYPVYSQFFGTKTKEIPLNENFEIDVRDYTQPNGGVIITNPNAPTSIALSLAEIEQVLQANPDRVVVIDEAYVDFGAESAVSLINRYENLVVCQTTSKSRSLAGLRVGFAIAQSHLIAALETVKNSFNSYPIDRFAIAAAVASFEDQVYFEEQCQKVITSREKLVRDLTVLGFNVLPSKANFIFATHSQHDAGQLAQKLREQGIIVRYFNKPRINQFLRITVGTDEQNARLVQTLKQDIL.

At lysine 219 the chain carries N6-(pyridoxal phosphate)lysine.

It belongs to the class-II pyridoxal-phosphate-dependent aminotransferase family. Histidinol-phosphate aminotransferase subfamily. As to quaternary structure, homodimer. The cofactor is pyridoxal 5'-phosphate.

The catalysed reaction is L-histidinol phosphate + 2-oxoglutarate = 3-(imidazol-4-yl)-2-oxopropyl phosphate + L-glutamate. It functions in the pathway amino-acid biosynthesis; L-histidine biosynthesis; L-histidine from 5-phospho-alpha-D-ribose 1-diphosphate: step 7/9. This chain is Histidinol-phosphate aminotransferase, found in Acinetobacter baumannii (strain ATCC 17978 / DSM 105126 / CIP 53.77 / LMG 1025 / NCDC KC755 / 5377).